The following is a 317-amino-acid chain: Acetylglutamate kinase (317 aa).

Substrate is bound by residues 75–76, Arg97, and Asn196; that span reads GG.

The protein belongs to the acetylglutamate kinase family. ArgB subfamily.

It is found in the cytoplasm. The catalysed reaction is N-acetyl-L-glutamate + ATP = N-acetyl-L-glutamyl 5-phosphate + ADP. The protein operates within amino-acid biosynthesis; L-arginine biosynthesis; N(2)-acetyl-L-ornithine from L-glutamate: step 2/4. Its function is as follows. Catalyzes the ATP-dependent phosphorylation of N-acetyl-L-glutamate. The protein is Acetylglutamate kinase of Corynebacterium jeikeium (strain K411).